An 892-amino-acid polypeptide reads, in one-letter code: Isoleucine--tRNA ligase (892 aa).

Residues 60-70 (PYANGSIHIGH) carry the 'HIGH' region motif. E552 is an L-isoleucyl-5'-AMP binding site. Positions 593–597 (KMSKS) match the 'KMSKS' region motif. K596 lines the ATP pocket. Positions 862, 865, 879, and 882 each coordinate Zn(2+).

Belongs to the class-I aminoacyl-tRNA synthetase family. IleS type 1 subfamily. In terms of assembly, monomer. The cofactor is Zn(2+).

The protein localises to the cytoplasm. The enzyme catalyses tRNA(Ile) + L-isoleucine + ATP = L-isoleucyl-tRNA(Ile) + AMP + diphosphate. Its function is as follows. Catalyzes the attachment of isoleucine to tRNA(Ile). As IleRS can inadvertently accommodate and process structurally similar amino acids such as valine, to avoid such errors it has two additional distinct tRNA(Ile)-dependent editing activities. One activity is designated as 'pretransfer' editing and involves the hydrolysis of activated Val-AMP. The other activity is designated 'posttransfer' editing and involves deacylation of mischarged Val-tRNA(Ile). This is Isoleucine--tRNA ligase from Mycoplasmopsis agalactiae (strain NCTC 10123 / CIP 59.7 / PG2) (Mycoplasma agalactiae).